The chain runs to 316 residues: Ribosomal RNA small subunit methyltransferase H (316 aa).

Residues 42–44, D62, F86, D104, and Q111 contribute to the S-adenosyl-L-methionine site; that span reads GGH.

This sequence belongs to the methyltransferase superfamily. RsmH family.

Its subcellular location is the cytoplasm. It carries out the reaction cytidine(1402) in 16S rRNA + S-adenosyl-L-methionine = N(4)-methylcytidine(1402) in 16S rRNA + S-adenosyl-L-homocysteine + H(+). In terms of biological role, specifically methylates the N4 position of cytidine in position 1402 (C1402) of 16S rRNA. The chain is Ribosomal RNA small subunit methyltransferase H from Polynucleobacter asymbioticus (strain DSM 18221 / CIP 109841 / QLW-P1DMWA-1) (Polynucleobacter necessarius subsp. asymbioticus).